We begin with the raw amino-acid sequence, 226 residues long: Glutathione peroxidase 3 (226 aa).

The N-terminal stretch at methionine 1–glycine 24 is a signal peptide. Selenocysteine 73 is a catalytic residue. A non-standard amino acid (selenocysteine) is located at residue selenocysteine 73.

The protein belongs to the glutathione peroxidase family. Homotetramer. In terms of tissue distribution, secreted in plasma.

Its subcellular location is the secreted. The enzyme catalyses 2 glutathione + H2O2 = glutathione disulfide + 2 H2O. It catalyses the reaction tert-butyl hydroperoxide + 2 glutathione = tert-butanol + glutathione disulfide + H2O. Functionally, protects cells and enzymes from oxidative damage, by catalyzing the reduction of hydrogen peroxide, lipid peroxides and organic hydroperoxide, by glutathione. The chain is Glutathione peroxidase 3 from Bos taurus (Bovine).